Here is a 180-residue protein sequence, read N- to C-terminus: uncharacterized protein (180 aa).

The signal sequence occupies residues 1 to 22; sequence MKRSIIAAAVFSSFFMSAGVFA.

The protein belongs to the fimbrial protein family.

Its function is as follows. Part of the yehABCD fimbrial operon. Could contribute to adhesion to various surfaces in specific environmental niches. This is an uncharacterized protein from Escherichia coli (strain K12).